The primary structure comprises 602 residues: Glutaminase liver isoform, mitochondrial (602 aa).

A mitochondrion-targeting transit peptide spans 1–14 (MRSMRALQNALSRA). 2 disordered regions span residues 1 to 29 (MRSMRALQNALSRAGSHGRRGGWGHPSRG) and 45 to 66 (AQGRGTPHSHQPQHSDHDASHS). S219 contacts substrate. Residue K253 is modified to N6-succinyllysine. Substrate is bound at residue N268. N6-acetyllysine occurs at positions 279 and 284. Residues E314 and N321 each contribute to the substrate site. Position 329 is an N6-acetyllysine (K329). Residues Y347, Y399, and V417 each coordinate substrate. 2 ANK repeats span residues 518 to 551 (DSRTALHVAAAEGHIEVVKFLIEACKVNPFVKDR) and 552 to 585 (WGNIPLDDAVQFNHLEVVKLLQDYHDSYLLSETQ).

The protein belongs to the glutaminase family. As to quaternary structure, homotetramer, dimer of dimers. Does not assemble into higher oligomers. Interacts with the PDZ domain of the syntrophin SNTA1. Interacts with the PDZ domain of TAX1BP3.

It localises to the mitochondrion. The catalysed reaction is L-glutamine + H2O = L-glutamate + NH4(+). Enzyme activity is not stimulated by phosphate. Phosphate increases kcat, but decreases substrate affinity, resulting in unchanged enzyme activity. Its function is as follows. Plays an important role in the regulation of glutamine catabolism. Promotes mitochondrial respiration and increases ATP generation in cells by catalyzing the synthesis of glutamate and alpha-ketoglutarate. Increases cellular anti-oxidant function via NADH and glutathione production. May play a role in preventing tumor proliferation. The chain is Glutaminase liver isoform, mitochondrial (Gls2) from Mus musculus (Mouse).